The chain runs to 260 residues: CD40 ligand (260 aa).

Residues 1 to 22 (MIETYSQPSPRSVATGLPASMK) lie on the Cytoplasmic side of the membrane. The chain crosses the membrane as a helical; Signal-anchor for type II membrane protein span at residues 23–46 (IFMYLLTVFLITQMIGSVLFAVYL). The Extracellular portion of the chain corresponds to 47 to 260 (HRRLDKVEEE…GFSSFGLLKL (214 aa)). One can recognise a THD domain in the interval 121–260 (IAAHVVSEAN…GFSSFGLLKL (140 aa)). A disulfide bridge links cysteine 177 with cysteine 217. N-linked (GlcNAc...) asparagine glycosylation is present at asparagine 239.

The protein belongs to the tumor necrosis factor family. As to quaternary structure, homotrimer. Interacts with CD28. CD40 ligand, soluble form: Exists as either a monomer or a homotrimer. Forms a ternary complex between CD40 and integrins for CD40-CD40LG signaling. The soluble form derives from the membrane form by proteolytic processing. As to expression, specifically expressed on activated CD4+ T-lymphocytes.

The protein resides in the cell membrane. The protein localises to the cell surface. It is found in the secreted. Functionally, cytokine that acts as a ligand to CD40/TNFRSF5. Costimulates T-cell proliferation and cytokine production. Its cross-linking on T-cells generates a costimulatory signal which enhances the production of IL4 and IL10 in conjunction with the TCR/CD3 ligation and CD28 costimulation. Induces the activation of NF-kappa-B. Induces the activation of kinases MAPK8 and PAK2 in T-cells. Mediates B-cell proliferation in the absence of co-stimulus as well as IgE production in the presence of IL4. Involved in immunoglobulin class switching. Acts as a ligand for integrins, specifically ITGA5:ITGB1 and ITGAV:ITGB3; both integrins and the CD40 receptor are required for activation of CD40-CD40LG signaling, which have cell-type dependent effects, such as B-cell activation, NF-kappa-B signaling and anti-apoptotic signaling. The polypeptide is CD40 ligand (Cd40lg) (Mus musculus (Mouse)).